Here is a 241-residue protein sequence, read N- to C-terminus: Small ribosomal subunit protein uS2 (241 aa).

The protein belongs to the universal ribosomal protein uS2 family.

This is Small ribosomal subunit protein uS2 from Klebsiella pneumoniae (strain 342).